The sequence spans 215 residues: Nucleoredoxin-like protein 1 (215 aa).

The 165-residue stretch at Met-1–Leu-165 folds into the Thioredoxin; atypical domain. Residues Ile-185–Glu-194 show a composition bias toward basic and acidic residues. A disordered region spans residues Ile-185–Phe-215.

Belongs to the nucleoredoxin family.

Its subcellular location is the cell projection. The protein localises to the cilium. The protein resides in the photoreceptor outer segment. Plays an important role in retinal cone photoreceptor survival. May play a role in cone cell viability, slowing down cone degeneration, does not seem to play a role in degenerating rods. The protein is Nucleoredoxin-like protein 1 (nxnl1) of Xenopus laevis (African clawed frog).